A 375-amino-acid chain; its full sequence is Sulfite efflux pump SSU1 (375 aa).

The Cytoplasmic portion of the chain corresponds to 1–25 (MPSGSGFHNIEEAGEKARKRDDWIA). The chain crosses the membrane as a helical span at residues 26 to 46 (ISNFHPGWFSVNMGTGITAIL). Residues 47-59 (LQNLPYQFPGLHY) lie on the Extracellular side of the membrane. The chain crosses the membrane as a helical span at residues 60–80 (IAVILFILNVIIFFLFLTISI). Residues 81 to 101 (TRYCLWPDKFKAMLAHPAHSM) are Cytoplasmic-facing. A helical transmembrane segment spans residues 102 to 122 (LLGTFPMGFATIINCIVFICV). Residues 123 to 135 (PVWGEWASRFAWG) are Extracellular-facing. Residues 136 to 156 (LWWIDAAVSVAICYFVPFMLM) traverse the membrane as a helical segment. Residues 157–167 (TKHTSSLETMT) lie on the Cytoplasmic side of the membrane. A helical membrane pass occupies residues 168–188 (AAWLLPIVAPVVAAASGGVVA). Residues 189-200 (DSLQNDTHALIT) lie on the Extracellular side of the membrane. Asn193 carries N-linked (GlcNAc...) asparagine glycosylation. The chain crosses the membrane as a helical span at residues 201-221 (ILVCYVMWGSAVPLAMVILVI). Residues 222 to 234 (YFQRLAIHKLVPR) lie on the Cytoplasmic side of the membrane. The chain crosses the membrane as a helical span at residues 235–255 (AAIVSALLPIGPLGQGGFGLM). Residues 256–277 (QLGVVAKRVFPRLDFLAPIAGD) are Extracellular-facing. The helical transmembrane segment at 278-298 (IFYVMGAFIAMIMWGFGLIWL) threads the bilayer. Residues 299–309 (WFALASFTRGK) are Cytoplasmic-facing. Residues 310–330 (FYFNIGWWAFTFPLGVFTTAT) traverse the membrane as a helical segment. Topologically, residues 331–343 (TQMGKEFNSPFFD) are extracellular. Residues 344-364 (ILGTFFSIVVTCMWVLVFALT) form a helical membrane-spanning segment. The Cytoplasmic portion of the chain corresponds to 365–375 (VYKSCTKELFR).

This sequence belongs to the tellurite-resistance/dicarboxylate transporter (TDT) family.

It is found in the cell membrane. Sulphite efflux pump required for the secretion of sulphite as a reducing agent. In the presence of sulphite, cystine in keratin is directly cleaved to cysteine and S-sulphocysteine, and thereby, reduced proteins become accessible to hydrolysis by a variety of secreted endo- and exoproteases. Excretion of sulphite mediated by an efflux pump also represents a detoxification pathway for dermatophytes during infection of the epidermal stratum corneum, hair and nails, which are rich in cysteine. This is Sulfite efflux pump SSU1 from Arthroderma benhamiae (strain ATCC MYA-4681 / CBS 112371) (Trichophyton mentagrophytes).